The chain runs to 285 residues: Dioxygenase andF (285 aa).

Fe cation contacts are provided by histidine 128, aspartate 130, and histidine 205.

This sequence belongs to the PhyH family. In terms of assembly, homodimer. Fe cation serves as cofactor.

It functions in the pathway secondary metabolite biosynthesis; terpenoid biosynthesis. Functionally, dioxygenase; part of the gene cluster that mediates the biosynthesis of anditomin, a fungal meroterpenoid. The first step of the pathway is the synthesis of 3,5-dimethylorsellinic acid (DMOA) by the polyketide synthase andM. DMOA is then converted to the phthalide compound 5,7-dihydroxy-4,6-dimethylphthalide (DHDMP) by the cytochrome P450 monooxygenase andK, which is further prenylated by the prenyltransferase andD to yield farnesyl-DHDMP. Further epoxidation by the FAD-dependent monooxygenase andE leads to epoxyfarnesyl-DHDMP. The next step involves the terpene cyclase andB that converts epoxyfarnesyl-DHDMP into preandiloid A through opening of the epoxide ring followed by the cyclization of the farnesyl moiety. Preandiloid A is in turn oxidized at the C-3 hydroxyl group to yield preandiloid B by the dehydrogenase andC. The dioxygenase andA is solely responsible for the dehydrogenation of preandiloid B leading to the enone preandiloid C, as well as for the intriguing structural rearrangement to generate the bicyclo[2.2.2]octane core, transforming preandiloid C into andiconin. FAD-binding monooxygenase andJ then produces andilesin D which is reduced by dehydrogenase andI to yield andilesin A. Action of acetyltransferase andG followed by a spontaneous acetate elimination leads then to andilesin B, which is in turn substrate of the short chain dehydrogenase andH to yield andilesin C. Finally, the dioxygenase andF catalyzes the transformation of andilesin C to anditomin. This is Dioxygenase andF from Emericella variicolor (Aspergillus stellatus).